Consider the following 419-residue polypeptide: Hyaluronan synthase (419 aa).

5 helical membrane-spanning segments follow: residues 8 to 28 (LIVLSFICLISILIYLNMYLF), 33 to 53 (VGIYGVILITYLVIKLGLSFL), 318 to 338 (IVALWTIFEVVMFMMLIVAIG), 345 to 365 (AIQLDLIKLFAFLSIIFIVAL), and 376 to 396 (PASFLLSPLYGILHLFVLQPL).

It belongs to the NodC/HAS family. Requires Mg(2+) as cofactor.

Its subcellular location is the cell membrane. The catalysed reaction is [hyaluronan](n) + UDP-N-acetyl-alpha-D-glucosamine = N-acetyl-beta-D-glucosaminyl-(1-&gt;4)-[hyaluronan](n) + UDP + H(+). The enzyme catalyses N-acetyl-beta-D-glucosaminyl-(1-&gt;4)-[hyaluronan](n) + UDP-alpha-D-glucuronate = [hyaluronan](n+1) + UDP + H(+). Its pathway is glycan biosynthesis; hyaluronan biosynthesis. Its function is as follows. Glycosaminoglycan synthesis. The hyaluronic acid capsule is involved in the pathogenicity of group A Streptococci; it may be the major virulence determinant. The polypeptide is Hyaluronan synthase (hasA) (Streptococcus pyogenes serotype M3 (strain ATCC BAA-595 / MGAS315)).